Here is a 374-residue protein sequence, read N- to C-terminus: Histone acetyltransferase type B catalytic subunit (374 aa).

2 interaction with histone H4 N-terminus regions span residues Asp42–Glu44 and Tyr194–Tyr196. Residues Val135–Glu303 enclose the N-acetyltransferase domain. Positions Trp197–Phe205 are interaction with HAT2. Residues Phe220 to Ile222 and Gln227 to Ser233 contribute to the acetyl-CoA site. Glu255 (proton donor/acceptor) is an active-site residue. Residues Asn258 and Arg267 each coordinate acetyl-CoA. Phosphoserine is present on Ser354.

This sequence belongs to the HAT1 family. In terms of assembly, component of the HAT-B complex composed of at least HAT1 and HAT2. In the cytoplasm, this complex binds to the histone H4 tail. In the nucleus, the HAT-B complex has an additional component, the histone H3/H4 chaperone HIF1.

Its subcellular location is the cytoplasm. The protein localises to the nucleus. It catalyses the reaction L-lysyl-[protein] + acetyl-CoA = N(6)-acetyl-L-lysyl-[protein] + CoA + H(+). Functionally, catalytic component of the histone acetylase B (HAT-B) complex. Acetylates 'Lys-12' of free histone H4 in the cytoplasm. The complex is also found in the nucleus, however it is not certain that it modifies histone H4 when packaged in chromatin. Histone H4 'Lys-12' acetylation is required for telomeric silencing. Has intrinsic substrate specificity that modifies lysine in recognition sequence GXGKXG. Involved in DNA double-strand break repair. This chain is Histone acetyltransferase type B catalytic subunit (HAT1), found in Saccharomyces cerevisiae (strain ATCC 204508 / S288c) (Baker's yeast).